A 239-amino-acid chain; its full sequence is Vesicle-associated protein 1-2 (239 aa).

Position 1 is an N-acetylmethionine (methionine 1). The Cytoplasmic segment spans residues methionine 1–glycine 215. Serine 2 bears the N-acetylserine; in Vesicle-associated protein 1-2, N-terminally processed mark. The 121-residue stretch at leucine 5–valine 125 folds into the MSP domain. A disordered region spans residues valine 123–serine 174. Serine 132 bears the Phosphoserine mark. The span at glutamate 140 to aspartate 156 shows a compositional bias: polar residues. Serine 164 is modified (phosphoserine). A coiled-coil region spans residues aspartate 169–glycine 215. The helical; Anchor for type IV membrane protein transmembrane segment at glycine 216 to methionine 236 threads the bilayer.

This sequence belongs to the VAMP-associated protein (VAP) (TC 9.B.17) family. Interacts with ORP3A. Binds to VLG at the endomembrane system.

Its subcellular location is the endoplasmic reticulum membrane. Its function is as follows. Vesicle-associated protein that binds the oxysterol-binding protein ORP3A and allows its targeting to the ER. The polypeptide is Vesicle-associated protein 1-2 (Arabidopsis thaliana (Mouse-ear cress)).